A 729-amino-acid polypeptide reads, in one-letter code: 1,4-alpha-glucan branching enzyme GlgB (729 aa).

The active-site Nucleophile is aspartate 407. Glutamate 460 acts as the Proton donor in catalysis.

Belongs to the glycosyl hydrolase 13 family. GlgB subfamily. Monomer.

The enzyme catalyses Transfers a segment of a (1-&gt;4)-alpha-D-glucan chain to a primary hydroxy group in a similar glucan chain.. It functions in the pathway glycan biosynthesis; glycogen biosynthesis. Catalyzes the formation of the alpha-1,6-glucosidic linkages in glycogen by scission of a 1,4-alpha-linked oligosaccharide from growing alpha-1,4-glucan chains and the subsequent attachment of the oligosaccharide to the alpha-1,6 position. This Pseudoalteromonas atlantica (strain T6c / ATCC BAA-1087) protein is 1,4-alpha-glucan branching enzyme GlgB.